A 511-amino-acid chain; its full sequence is MSLKPTLLLILDGWGKAPAGPGNAVTLAGMPHLSSLLRQAGCTELACSGRAVGLPEGFMGNSEVGHMNIGAGRVVYQDMTRIDIAVERGELASNPALTGLFEAVRATGGRVHLMGLLSDGGVHSHIAHVEALALAARDAGVEVVVHAFLDGRDTAPTSGVGYVKRLASFLESNRAGRIGSLVGRYYAMDRDKRWDRNLLAWAMLTRGEGAPADDPVGAVEAAYAAGETDEFVKPRVVVEGGSPIGTIRDGDGVFFFNFRADRARQLSHMFVDGTFEHGDRGHVPSLAGFATMTSYDPALGLPVAFDKQPLDGTLGEVVANQGLRQLRIAETEKYAHVTYFLNCGREEPFPGEERRLLPSPRDVATYDLKPEMSAEAVTDTLLEEWAGGGYTLAVCNVANLDMVGHTGVIPAAVRACETVDACVRRIADAVLASGGRLVITADHGNAEELLDESGNPQTAHSMNRVPFTVVEQGRVHTFREGGVLGDIAPTILGLWGVPASAGMTGTSLITE.

2 residues coordinate Mn(2+): aspartate 12 and serine 62. The active-site Phosphoserine intermediate is serine 62. Substrate is bound by residues histidine 123, 152–153 (RD), arginine 184, arginine 190, 259–262 (RADR), and lysine 333. Residues aspartate 401, histidine 405, aspartate 442, histidine 443, and histidine 460 each contribute to the Mn(2+) site.

Belongs to the BPG-independent phosphoglycerate mutase family. Monomer. Requires Mn(2+) as cofactor.

It carries out the reaction (2R)-2-phosphoglycerate = (2R)-3-phosphoglycerate. It functions in the pathway carbohydrate degradation; glycolysis; pyruvate from D-glyceraldehyde 3-phosphate: step 3/5. Catalyzes the interconversion of 2-phosphoglycerate and 3-phosphoglycerate. The chain is 2,3-bisphosphoglycerate-independent phosphoglycerate mutase from Nitratidesulfovibrio vulgaris (strain ATCC 29579 / DSM 644 / CCUG 34227 / NCIMB 8303 / VKM B-1760 / Hildenborough) (Desulfovibrio vulgaris).